Reading from the N-terminus, the 194-residue chain is Crossover junction endodeoxyribonuclease RuvC (194 aa).

Catalysis depends on residues D7, E68, and D141. Positions 7, 68, and 141 each coordinate Mg(2+). The interval 162–194 (GGEREQHLTAAQRQWAEAAQNSTRRRKNSDRGM) is disordered. The segment covering 184 to 194 (TRRRKNSDRGM) has biased composition (basic residues).

The protein belongs to the RuvC family. As to quaternary structure, homodimer which binds Holliday junction (HJ) DNA. The HJ becomes 2-fold symmetrical on binding to RuvC with unstacked arms; it has a different conformation from HJ DNA in complex with RuvA. In the full resolvosome a probable DNA-RuvA(4)-RuvB(12)-RuvC(2) complex forms which resolves the HJ. Mg(2+) serves as cofactor.

It localises to the cytoplasm. The catalysed reaction is Endonucleolytic cleavage at a junction such as a reciprocal single-stranded crossover between two homologous DNA duplexes (Holliday junction).. Its function is as follows. The RuvA-RuvB-RuvC complex processes Holliday junction (HJ) DNA during genetic recombination and DNA repair. Endonuclease that resolves HJ intermediates. Cleaves cruciform DNA by making single-stranded nicks across the HJ at symmetrical positions within the homologous arms, yielding a 5'-phosphate and a 3'-hydroxyl group; requires a central core of homology in the junction. The consensus cleavage sequence is 5'-(A/T)TT(C/G)-3'. Cleavage occurs on the 3'-side of the TT dinucleotide at the point of strand exchange. HJ branch migration catalyzed by RuvA-RuvB allows RuvC to scan DNA until it finds its consensus sequence, where it cleaves and resolves the cruciform DNA. The sequence is that of Crossover junction endodeoxyribonuclease RuvC from Bifidobacterium longum subsp. infantis (strain ATCC 15697 / DSM 20088 / JCM 1222 / NCTC 11817 / S12).